Here is a 136-residue protein sequence, read N- to C-terminus: Small ribosomal subunit protein uS9 (136 aa).

A disordered region spans residues 96–136; it reads LSPDNRKPLKTEGHLSRDPRAKERRKYGLKKARKAPQFSKR. Residues 98–116 are compositionally biased toward basic and acidic residues; the sequence is PDNRKPLKTEGHLSRDPRA. Over residues 117–136 the composition is skewed to basic residues; that stretch reads KERRKYGLKKARKAPQFSKR.

The protein belongs to the universal ribosomal protein uS9 family.

The polypeptide is Small ribosomal subunit protein uS9 (Prochlorococcus marinus (strain MIT 9515)).